We begin with the raw amino-acid sequence, 52 residues long: Thiocillin (52 aa).

Positions M1–A38 are excised as a propeptide. Residues S39–C40 constitute a cross-link (thiazole-4-carboxylic acid (Ser-Cys)). The segment at residues S39–C47 is a cross-link (pyridine-2,5-dicarboxylic acid (Ser-Cys) (with S-48)). The pyridine-2,5-dicarboxylic acid (Ser-Ser) (with C-47) cross-link spans S39–S48. T42 carries the (Z)-2,3-didehydrobutyrine modification. Residues T42 to C43 constitute a cross-link (thiazole-4-carboxylic acid (Thr-Cys)). At V44 the chain carries 3-hydroxyvaline (Val); partial. The thiazole-4-carboxylic acid (Val-Cys) cross-link spans V44–C45. An O-methylthreonine; partial modification is found at T46. The thiazole-4-carboxylic acid (Thr-Cys) cross-link spans T46 to C47. Positions S48 to C49 form a cross-link, thiazole-4-carboxylic acid (Ser-Cys). The thiazole-4-carboxylic acid (Cys-Cys) cross-link spans C49–C50. The residue at position 51 (T51) is a (Z)-2,3-didehydrobutyrine. T52 bears the 1-amino-2-propanone; alternate mark. Residue T52 is modified to Decarboxylated threonine; alternate.

It belongs to the thiocillin family. Post-translationally, maturation of thiazole and oxazole containing antibiotics involves the enzymatic condensation of a Cys, Ser or Thr with the alpha-carbonyl of the preceding amino acid to form a thioether or ether bond, then dehydration to form a double bond with the alpha-amino nitrogen. Thiazoline or oxazoline ring are dehydrogenated to form thiazole or oxazole rings. Maturation of pyridinyl containing antibiotics involves the cross-linking of a Ser and a Cys-Ser pair usually separated by 7 or 8 residues along the peptide chain. The Ser residues are dehydrated to didehydroalanines, then bonded between their beta carbons. The alpha carbonyl of the Cys condenses with alpha carbon of the first Ser to form a pyridinyl ring. The ring may be multiply dehydrogenated to form a pyridine ring with loss of the amino nitrogen of the first Ser. In terms of processing, the 8 possible modification isomers, differing in the presence of modifications at three positions, have been characterized in PubMed:19196969. Val-44 is modified to 3-hydroxyvaline in forms thiocillin I, thiocillin II, YM-266183, and YM-266184. Thr-46 is modified to O-methylthreonine in forms thiocillin II, thiocillin III, thiocillin IV, and YM-266184. Thr-52 is decarboxylated to (R)-1-aminopropan-2-ol in forms micrococcin P1, thiocillin I, thiocillin II, and thiocillin III. Thr-52 is decarboxylated and oxidized to 1-amino-2-propanone in forms micrococcin P2, YM-266183, YM-266184. and thiocillin IV. Post-translationally, the structure of 2,3-didehydrobutyrines is not discussed in PubMed:19196969. However, in Fig. 3 the residues are diagrammed as Z-isomers.

The protein localises to the secreted. Its function is as follows. Has bacteriocidal activity against Gram-positive bacteria, but not against Gram-negative bacteria. Inhibits bacterial protein biosynthesis by acting on the elongation factor Tu (EF-Tu). This chain is Thiocillin, found in Bacillus cereus (strain ATCC 14579 / DSM 31 / CCUG 7414 / JCM 2152 / NBRC 15305 / NCIMB 9373 / NCTC 2599 / NRRL B-3711).